Reading from the N-terminus, the 329-residue chain is MATNIGMMDSAYFVGRSEILAWINSTLQLNLSKVEEACSGAVHCQLMDSVHPGTVPMHKVNFDAKSEYEMIQNYKVLQDVFNKLKITKHIEVSKLVKGRPLDNLEFMQWMKKYCDSVNGGQHNYHALERREASKGGKEATKRAAATQQSGKSSSSSAPPRPSSSNGTRKHEPQSNNTGTHHSSTGNHHHSSKPSAKQSKPVPAYDEKITELKLYIDSLEKERDFYFSKLRDVEILCQNPDTEHLPLVGSIKRILYAADGEDVGAAETQTLSPIAEGSEERRNSVTESQKRKLIVNLDVDVAAITTLSPRQRLSDASDVKCSGSSPLLTC.

In terms of domain architecture, Calponin-homology (CH) spans 13–115 (FVGRSEILAW…FMQWMKKYCD (103 aa)). The segment covering 130–141 (REASKGGKEATK) has biased composition (basic and acidic residues). The interval 130-203 (REASKGGKEA…SAKQSKPVPA (74 aa)) is disordered. The span at 174–185 (SNNTGTHHSSTG) shows a compositional bias: low complexity. In terms of domain architecture, EB1 C-terminal spans 193-263 (PSAKQSKPVP…LYAADGEDVG (71 aa)). Positions 289–311 (KRKLIVNLDVDVAAITTLSPRQR) are required for nuclear localization.

Belongs to the MAPRE family. In terms of assembly, homodimer. In terms of tissue distribution, highly expressed in the root and shoot meristems, in guard cells of leaf stomata, pollen grains and pollen tubes.

It localises to the nucleus. Its subcellular location is the cytoplasm. The protein resides in the cytoskeleton. It is found in the spindle. The protein localises to the phragmoplast. Functionally, plant-specific EB1 subtype that functions preferentially at early stages of plant mitosis by regulating spindle positioning and chromosome segregation. Accumulates in the prophase nucleus and is required to maintain spindle bipolarity during premetaphase and/or metaphase and for efficient segregation of chromosomes at anaphase. May play a role in the dynamics of microtubule network in elongating pollen tubes. This Arabidopsis thaliana (Mouse-ear cress) protein is Microtubule-associated protein RP/EB family member 1C (EB1C).